Here is a 490-residue protein sequence, read N- to C-terminus: Aspartyl/glutamyl-tRNA(Asn/Gln) amidotransferase subunit B (490 aa).

This sequence belongs to the GatB/GatE family. GatB subfamily. Heterotrimer of A, B and C subunits.

It catalyses the reaction L-glutamyl-tRNA(Gln) + L-glutamine + ATP + H2O = L-glutaminyl-tRNA(Gln) + L-glutamate + ADP + phosphate + H(+). It carries out the reaction L-aspartyl-tRNA(Asn) + L-glutamine + ATP + H2O = L-asparaginyl-tRNA(Asn) + L-glutamate + ADP + phosphate + 2 H(+). Functionally, allows the formation of correctly charged Asn-tRNA(Asn) or Gln-tRNA(Gln) through the transamidation of misacylated Asp-tRNA(Asn) or Glu-tRNA(Gln) in organisms which lack either or both of asparaginyl-tRNA or glutaminyl-tRNA synthetases. The reaction takes place in the presence of glutamine and ATP through an activated phospho-Asp-tRNA(Asn) or phospho-Glu-tRNA(Gln). The polypeptide is Aspartyl/glutamyl-tRNA(Asn/Gln) amidotransferase subunit B (Methylobacterium radiotolerans (strain ATCC 27329 / DSM 1819 / JCM 2831 / NBRC 15690 / NCIMB 10815 / 0-1)).